Here is a 203-residue protein sequence, read N- to C-terminus: Holliday junction branch migration complex subunit RuvA (203 aa).

Positions 1-62 (MYEYFLGQVT…ENGMSLFGFF (62 aa)) are domain I. The interval 63 to 141 (DADEKALFEK…DLNVDVTGQT (79 aa)) is domain II. The interval 142 to 148 (ALDVDAP) is flexible linker. A domain III region spans residues 149-203 (AVDGALADALAALEALGYSKADVKKVTKKLETFSQTQGADTNTLLSEGLRLLMKK).

This sequence belongs to the RuvA family. In terms of assembly, homotetramer. Forms an RuvA(8)-RuvB(12)-Holliday junction (HJ) complex. HJ DNA is sandwiched between 2 RuvA tetramers; dsDNA enters through RuvA and exits via RuvB. An RuvB hexamer assembles on each DNA strand where it exits the tetramer. Each RuvB hexamer is contacted by two RuvA subunits (via domain III) on 2 adjacent RuvB subunits; this complex drives branch migration. In the full resolvosome a probable DNA-RuvA(4)-RuvB(12)-RuvC(2) complex forms which resolves the HJ.

The protein resides in the cytoplasm. In terms of biological role, the RuvA-RuvB-RuvC complex processes Holliday junction (HJ) DNA during genetic recombination and DNA repair, while the RuvA-RuvB complex plays an important role in the rescue of blocked DNA replication forks via replication fork reversal (RFR). RuvA specifically binds to HJ cruciform DNA, conferring on it an open structure. The RuvB hexamer acts as an ATP-dependent pump, pulling dsDNA into and through the RuvAB complex. HJ branch migration allows RuvC to scan DNA until it finds its consensus sequence, where it cleaves and resolves the cruciform DNA. The protein is Holliday junction branch migration complex subunit RuvA of Lactiplantibacillus plantarum (strain ATCC BAA-793 / NCIMB 8826 / WCFS1) (Lactobacillus plantarum).